Reading from the N-terminus, the 126-residue chain is Large ribosomal subunit protein bL12 (126 aa).

Belongs to the bacterial ribosomal protein bL12 family. As to quaternary structure, homodimer. Part of the ribosomal stalk of the 50S ribosomal subunit. Forms a multimeric L10(L12)X complex, where L10 forms an elongated spine to which 2 to 4 L12 dimers bind in a sequential fashion. Binds GTP-bound translation factors.

Forms part of the ribosomal stalk which helps the ribosome interact with GTP-bound translation factors. Is thus essential for accurate translation. This chain is Large ribosomal subunit protein bL12, found in Bordetella avium (strain 197N).